A 468-amino-acid chain; its full sequence is uncharacterized protein (468 aa).

Coiled coils occupy residues 10-94 and 147-279; these read NEAL…VKEL and FVEL…EASI. The segment at 324–369 is disordered; the sequence is TPRTVDPIPEGTIIKKESSDDAMFSGLKKSKPKKSNKSNNNQADSD. Serine 342 is subject to Phosphoserine. The stretch at 399-445 forms a coiled coil; that stretch reads VEQLKSRIAHFKEQQDSVTKQRIEKAKQEIEKLEAKYNSKEEKTLTE.

The protein localises to the cytoplasm. This is an uncharacterized protein from Schizosaccharomyces pombe (strain 972 / ATCC 24843) (Fission yeast).